Reading from the N-terminus, the 93-residue chain is RNA-binding protein Hfq (93 aa).

Residues 9-68 (DPYLNALRRERIPVSIYLVNGIKLQGQIESFDQFVILLKNTVSQMVYKHAISTVVPARAI) form the Sm domain. Low complexity predominate over residues 70 to 81 (HNNNSNHAHQAA). The interval 70 to 93 (HNNNSNHAHQAAPVQSAEVVEKVE) is disordered.

It belongs to the Hfq family. Homohexamer.

In terms of biological role, RNA chaperone that binds small regulatory RNA (sRNAs) and mRNAs to facilitate mRNA translational regulation in response to envelope stress, environmental stress and changes in metabolite concentrations. Also binds with high specificity to tRNAs. The sequence is that of RNA-binding protein Hfq from Glaesserella parasuis serovar 5 (strain SH0165) (Haemophilus parasuis).